Reading from the N-terminus, the 327-residue chain is Delta-aminolevulinic acid dehydratase (327 aa).

Residues C119, C121, and C129 each coordinate Zn(2+). K198 serves as the catalytic Schiff-base intermediate with substrate. Residues R208 and R220 each coordinate 5-aminolevulinate. E236 lines the Mg(2+) pocket. Catalysis depends on K251, which acts as the Schiff-base intermediate with substrate. Residues S277 and Y316 each contribute to the 5-aminolevulinate site.

It belongs to the ALAD family. As to quaternary structure, homooctamer. It depends on Zn(2+) as a cofactor.

It catalyses the reaction 2 5-aminolevulinate = porphobilinogen + 2 H2O + H(+). Its pathway is porphyrin-containing compound metabolism; protoporphyrin-IX biosynthesis; coproporphyrinogen-III from 5-aminolevulinate: step 1/4. Catalyzes an early step in the biosynthesis of tetrapyrroles. Binds two molecules of 5-aminolevulinate per subunit, each at a distinct site, and catalyzes their condensation to form porphobilinogen. This chain is Delta-aminolevulinic acid dehydratase (hemB), found in Synechocystis sp. (strain ATCC 27184 / PCC 6803 / Kazusa).